Consider the following 352-residue polypeptide: MTITTLSRQNIQALTPYQSARKLGGNGTIWLNANEYPTSPEFQLSGKDLNRYPEPQPQRVVQAYANYAGVSTENVLVTRGGDEGIELIIHTFCEPKQDAILFCPPTYGMYAVSAETAGVLSKSVPLTDDFQLNLPEIKNHLNDVKVVFVCSPNNPTGNLLKQSDILDLLQITAGKAIVVVDEAYIEFCPEASVINLLKNYPHLAIIRTLSKAFALAGLRCGFVLANPELIDILSKVIAPYPIPVPSADLAEQALRPANIATVQALTQELLSNRQWLAKALLVLHQVEKVYESEANYLLIKCQNGQAVFKALWEQGIILRDQNKTLHLQNCIRITVGTRNECEKVVEAIKEVK.

Lys211 is subject to N6-(pyridoxal phosphate)lysine.

The protein belongs to the class-II pyridoxal-phosphate-dependent aminotransferase family. Histidinol-phosphate aminotransferase subfamily. In terms of assembly, homodimer. The cofactor is pyridoxal 5'-phosphate.

It catalyses the reaction L-histidinol phosphate + 2-oxoglutarate = 3-(imidazol-4-yl)-2-oxopropyl phosphate + L-glutamate. It functions in the pathway amino-acid biosynthesis; L-histidine biosynthesis; L-histidine from 5-phospho-alpha-D-ribose 1-diphosphate: step 7/9. In Haemophilus influenzae (strain 86-028NP), this protein is Histidinol-phosphate aminotransferase 1.